We begin with the raw amino-acid sequence, 129 residues long: D-ribose pyranase (129 aa).

Histidine 20 serves as the catalytic Proton donor. Substrate-binding positions include aspartate 28, histidine 96, and 118-120; that span reads YAN.

This sequence belongs to the RbsD / FucU family. RbsD subfamily. In terms of assembly, homodecamer.

Its subcellular location is the cytoplasm. The enzyme catalyses beta-D-ribopyranose = beta-D-ribofuranose. It functions in the pathway carbohydrate metabolism; D-ribose degradation; D-ribose 5-phosphate from beta-D-ribopyranose: step 1/2. Its function is as follows. Catalyzes the interconversion of beta-pyran and beta-furan forms of D-ribose. In Exiguobacterium sp. (strain ATCC BAA-1283 / AT1b), this protein is D-ribose pyranase.